Consider the following 727-residue polypeptide: Probable acyl-activating enzyme 18, peroxisomal (727 aa).

Residues serine 725–isoleucine 727 carry the Microbody targeting signal motif.

The protein belongs to the ATP-dependent AMP-binding enzyme family. Expressed in flowers.

The protein localises to the peroxisome. Functionally, may be involved in the peroxisomal activation of 2,4-dichlorophenoxybutyric acid (2,4-DB), a precursor of active auxins that inhibit root growth. The chain is Probable acyl-activating enzyme 18, peroxisomal (AAE18) from Arabidopsis thaliana (Mouse-ear cress).